Reading from the N-terminus, the 477-residue chain is Cysteine protease ATG4b (477 aa).

Residues Ser-11 to Asn-39 are disordered. Polar residues predominate over residues Ser-25–Asn-39. The Nucleophile role is filled by Cys-173. Active-site residues include Asp-368 and His-370. Positions Ala-453 to Leu-477 are disordered. The segment covering Glu-454–Ile-465 has biased composition (low complexity).

Belongs to the peptidase C54 family. In terms of assembly, interacts with ATG8a and ATG8d. As to expression, constitutively expressed.

Its subcellular location is the cytoplasm. It catalyses the reaction [protein]-C-terminal L-amino acid-glycyl-phosphatidylethanolamide + H2O = [protein]-C-terminal L-amino acid-glycine + a 1,2-diacyl-sn-glycero-3-phosphoethanolamine. Cysteine protease that plays a key role in autophagy by mediating both proteolytic activation and delipidation of ATG8 family proteins. The protease activity is required for proteolytic activation of ATG8 family proteins: cleaves the C-terminal amino acid of ATG8 proteins to reveal a C-terminal glycine. Exposure of the glycine at the C-terminus is essential for ATG8 proteins conjugation to phosphatidylethanolamine (PE) and insertion to membranes, which is necessary for autophagy. In addition to the protease activity, also mediates delipidation of PE-conjugated ATG8 proteins. The polypeptide is Cysteine protease ATG4b (Arabidopsis thaliana (Mouse-ear cress)).